Here is a 648-residue protein sequence, read N- to C-terminus: Beta-glucuronidase (648 aa).

The first 22 residues, 1–22, serve as a signal peptide directing secretion; the sequence is MSLKWSACWVALGQLLCSCALA. N172 and N416 each carry an N-linked (GlcNAc...) asparagine glycan. E447 functions as the Proton donor in the catalytic mechanism. N627 carries N-linked (GlcNAc...) asparagine glycosylation.

This sequence belongs to the glycosyl hydrolase 2 family. Homotetramer.

Its subcellular location is the lysosome. It is found in the endoplasmic reticulum. The catalysed reaction is a beta-D-glucuronoside + H2O = D-glucuronate + an alcohol. With respect to regulation, inhibited by L-aspartic acid. In terms of biological role, plays an important role in the degradation of dermatan and keratan sulfates. The polypeptide is Beta-glucuronidase (Gusb) (Mus musculus (Mouse)).